The chain runs to 84 residues: Small ribosomal subunit protein uS17 (84 aa).

It belongs to the universal ribosomal protein uS17 family. As to quaternary structure, part of the 30S ribosomal subunit.

In terms of biological role, one of the primary rRNA binding proteins, it binds specifically to the 5'-end of 16S ribosomal RNA. The protein is Small ribosomal subunit protein uS17 of Clostridium botulinum (strain 657 / Type Ba4).